Reading from the N-terminus, the 221-residue chain is 3-phospho-D-glycerate guanylyltransferase (221 aa).

This sequence belongs to the CofC family.

It carries out the reaction (2R)-3-phosphoglycerate + GTP + H(+) = 3-[(R)-glyceryl]-diphospho-5'-guanosine + diphosphate. The catalysed reaction is (2S)-2-phospholactate + GTP + H(+) = (2S)-lactyl-2-diphospho-5'-guanosine + diphosphate. The protein operates within cofactor biosynthesis; coenzyme F420 biosynthesis. Guanylyltransferase that catalyzes the activation of (2R)-3-phosphoglycerate (3PG) as 3-[(R)-glyceryl]-diphospho-5'-guanosine, via the condensation of 3PG with GTP. It is involved in the biosynthesis of a derivative of the hydride carrier cofactor coenzyme F420, 3PG-F420. Can also use (2S)-2-phospholactate (2-PL), with lower turnover, and has weak activity with phosphoenolpyruvate (PEP). This chain is 3-phospho-D-glycerate guanylyltransferase, found in Mycetohabitans rhizoxinica (strain DSM 19002 / CIP 109453 / HKI 454) (Paraburkholderia rhizoxinica).